The chain runs to 313 residues: Methionyl-tRNA formyltransferase (313 aa).

A (6S)-5,6,7,8-tetrahydrofolate-binding site is contributed by 113 to 116; it reads SLLP.

It belongs to the Fmt family.

It catalyses the reaction L-methionyl-tRNA(fMet) + (6R)-10-formyltetrahydrofolate = N-formyl-L-methionyl-tRNA(fMet) + (6S)-5,6,7,8-tetrahydrofolate + H(+). In terms of biological role, attaches a formyl group to the free amino group of methionyl-tRNA(fMet). The formyl group appears to play a dual role in the initiator identity of N-formylmethionyl-tRNA by promoting its recognition by IF2 and preventing the misappropriation of this tRNA by the elongation apparatus. This chain is Methionyl-tRNA formyltransferase, found in Francisella tularensis subsp. tularensis (strain FSC 198).